The sequence spans 80 residues: uncharacterized protein (80 aa).

This is an uncharacterized protein from Shigella flexneri.